The sequence spans 1189 residues: Disabled homolog 2-interacting protein (1189 aa).

A disordered region spans residues 1-75 (MSAGGSARKS…EPSAATPFRV (75 aa)). The span at 20–38 (LLRRPRLQRQRSRSRSRTR) shows a compositional bias: basic residues. The span at 39–49 (PARESPQERPG) shows a compositional bias: basic and acidic residues. Residues 101–202 (SFRHILPGFR…WMENLRRAVH (102 aa)) form the PH domain. The region spanning 193–311 (WMENLRRAVH…AGRQFVEKWY (119 aa)) is the C2 domain. One can recognise a Ras-GAP domain in the interval 387–595 (GKVKDFLTDL…TNMQRFLLEI (209 aa)). The segment at 646–943 (LRDVHTALST…RTPPNLLSTL (298 aa)) is necessary for interaction with AKT1. A compositionally biased stretch (polar residues) spans 653–668 (LSTPGSGQLPGTNDLA). 2 disordered regions span residues 653–678 (LSTP…SSSI) and 715–742 (RSSG…MANG). A compositionally biased stretch (low complexity) spans 669–678 (STPGSGSSSI). Residues 715–731 (RSSGVQPSPARSSSYSE) are compositionally biased toward polar residues. The residue at position 728 (Ser-728) is a Phosphoserine; by MAP3K5 and RIPK1. Ser-747 carries the post-translational modification Phosphoserine. Disordered regions lie at residues 803-823 (AGQT…PQLL), 843-865 (PRGL…NSEE), 895-998 (SLTE…SPNA), 1015-1035 (EDEG…KDEL), and 1164-1189 (RNGI…SSNC). The segment covering 852-865 (EGHSSLSSHSNSEE) has biased composition (low complexity). Positions 919–931 (QPPPPPPPPPPAP) are enriched in pro residues. 2 stretches are compositionally biased toward polar residues: residues 938–955 (NLLS…TLAS) and 966–976 (RLRQQSSSSKG). A phosphoserine mark is found at Ser-978 and Ser-995. Basic and acidic residues predominate over residues 1023–1035 (PPHRDRLRSKDEL). Residues 1026–1159 (RDRLRSKDEL…SALTQLKERY (134 aa)) adopt a coiled-coil conformation.

As to quaternary structure, on plasma membrane, exists in an inactive form complexed with TNFR1; in response to TNF-alpha, dissociates from TNFR1 complex, translocates to cytoplasm and forms part of an intracellular signaling complex comprising TRADD, RIPK1, TRAF2 and MAP3K5. Interacts with DAB1. Interacts (via NPXY motif) with DAB2 (via PID domain). Interacts (via PH domain) with ERN1. Part of a cytoplasmic complex made of HIPK1, DAB2IP and MAP3K5 in response to TNF-alpha; this complex formation promotes MAP3K5-JNK activation and subsequent apoptosis. Interacts (via N-terminal domain) with JAK2; the interaction occurs in a IFNG/IFN-gamma-dependent manner and inhibits JAK2 autophosphorylation activity. Interacts (via C2 domain) with GSK3B; the interaction stimulates GSK3B kinase activation. Interacts (via C2 domain) with PPP2CA. Interacts (via proline-rich motif) with a regulatory p85 subunit (via SH3 domain) of the PI3K complex; the interaction inhibits the PI3K-AKT complex activity in a TNF-alpha-dependent manner in prostate cancer (PCa) cells. Interacts with AKT1; the interaction is increased in a TNF-alpha-induced manner. Interacts (via C2 domain and active form preferentially) with KDR/VEGFR2 (tyrosine-phosphorylated active form preferentially); the interaction occurs at the late phase of VEGFA response and inhibits KDR/VEGFR2 activity. Interacts (via N-terminus C2 domain) with MAP3K5 ('Ser-966' dephosphorylated form preferentially); the interaction occurs in a TNF-alpha-induced manner. Interacts (via Ras-GAP domain) with the catalytic subunit of protein phosphatase PP2A; the interaction occurs in resting endothelial cells, is further enhanced by TNF-alpha stimulation and is required to bridge PP2A to MAP3K5. Interacts (via C-terminus PER domain) with TRAF2 (via zinc fingers); the interaction occurs in a TNF-alpha-dependent manner. Interacts with 14-3-3 proteins; the interaction occurs in a TNF-alpha-dependent manner. Interacts (via Ras-GAP domain) with RIPK1 (via kinase domain); the interaction occurs in a TNF-alpha-dependent manner. Interacts with RAB40C; acts as a GAP for RAB40C. In terms of processing, in response to TNF-alpha-induction, phosphorylated at Ser-728; phosphorylation leads to a conformational change, and thus, increases its association with 14-3-3 proteins, MAP3K5, RIPK1 and TRAF2 in endothelial cells; also stimulates regulatory p85 subunit sequestring and PI3K-p85 complex activity inhibition. As to expression, expressed in endothelial and vascular smooth muscle cells (VSMCs). Expressed in prostate epithelial but poorly in prostate cancer cells. Poorly expressed in medulloblastoma cells compared to cerebellar precursor proliferating progenitor cells (at protein level). Low expression in prostate. Down-regulated in prostate cancer.

The protein localises to the cytoplasm. It localises to the cell membrane. The protein resides in the membrane. It is found in the cell projection. Its subcellular location is the dendrite. Its function is as follows. Functions as a scaffold protein implicated in the regulation of a large spectrum of both general and specialized signaling pathways. Involved in several processes such as innate immune response, inflammation and cell growth inhibition, apoptosis, cell survival, angiogenesis, cell migration and maturation. Also plays a role in cell cycle checkpoint control; reduces G1 phase cyclin levels resulting in G0/G1 cell cycle arrest. Mediates signal transduction by receptor-mediated inflammatory signals, such as the tumor necrosis factor (TNF), interferon (IFN) or lipopolysaccharide (LPS). Modulates the balance between phosphatidylinositol 3-kinase (PI3K)-AKT-mediated cell survival and apoptosis stimulated kinase (MAP3K5)-JNK signaling pathways; sequesters both AKT1 and MAP3K5 and counterbalances the activity of each kinase by modulating their phosphorylation status in response to pro-inflammatory stimuli. Acts as a regulator of the endoplasmic reticulum (ER) unfolded protein response (UPR) pathway; specifically involved in transduction of the ER stress-response to the JNK cascade through ERN1. Mediates TNF-alpha-induced apoptosis activation by facilitating dissociation of inhibitor 14-3-3 from MAP3K5; recruits the PP2A phosphatase complex which dephosphorylates MAP3K5 on 'Ser-966', leading to the dissociation of 13-3-3 proteins and activation of the MAP3K5-JNK signaling pathway in endothelial cells. Also mediates TNF/TRAF2-induced MAP3K5-JNK activation, while it inhibits CHUK-NF-kappa-B signaling. Acts a negative regulator in the IFN-gamma-mediated JAK-STAT signaling cascade by inhibiting smooth muscle cell (VSMCs) proliferation and intimal expansion, and thus, prevents graft arteriosclerosis (GA). Acts as a GTPase-activating protein (GAP) for the ADP ribosylation factor 6 (ARF6), Ras and RAB40C. Promotes hydrolysis of the ARF6-bound GTP and thus, negatively regulates phosphatidylinositol 4,5-bisphosphate (PIP2)-dependent TLR4-TIRAP-MyD88 and NF-kappa-B signaling pathways in endothelial cells in response to lipopolysaccharides (LPS). Binds specifically to phosphatidylinositol 4-phosphate (PtdIns4P) and phosphatidylinositol 3-phosphate (PtdIns3P). In response to vascular endothelial growth factor (VEGFA), acts as a negative regulator of the VEGFR2-PI3K-mediated angiogenic signaling pathway by inhibiting endothelial cell migration and tube formation. In the developing brain, promotes both the transition from the multipolar to the bipolar stage and the radial migration of cortical neurons from the ventricular zone toward the superficial layer of the neocortex in a glial-dependent locomotion process. Probable downstream effector of the Reelin signaling pathway; promotes Purkinje cell (PC) dendrites development and formation of cerebellar synapses. Also functions as a tumor suppressor protein in prostate cancer progression; prevents cell proliferation and epithelial-to-mesenchymal transition (EMT) through activation of the glycogen synthase kinase-3 beta (GSK3B)-induced beta-catenin and inhibition of PI3K-AKT and Ras-MAPK survival downstream signaling cascades, respectively. In Homo sapiens (Human), this protein is Disabled homolog 2-interacting protein.